A 138-amino-acid chain; its full sequence is Large ribosomal subunit protein uL16 (138 aa).

The segment covering 1–13 (MLQPKRRKYRKEQ) has biased composition (basic residues). The disordered stretch occupies residues 1–22 (MLQPKRRKYRKEQKGRNTGVAT).

This sequence belongs to the universal ribosomal protein uL16 family. In terms of assembly, part of the 50S ribosomal subunit.

Binds 23S rRNA and is also seen to make contacts with the A and possibly P site tRNAs. The chain is Large ribosomal subunit protein uL16 from Paraburkholderia phymatum (strain DSM 17167 / CIP 108236 / LMG 21445 / STM815) (Burkholderia phymatum).